The sequence spans 485 residues: Glutamate--tRNA ligase (485 aa).

The short motif at 11 to 21 (PSPTGHLHIGN) is the 'HIGH' region element. The 'KMSKS' region signature appears at 252–256 (KLSKR). An ATP-binding site is contributed by lysine 255.

It belongs to the class-I aminoacyl-tRNA synthetase family. Glutamate--tRNA ligase type 1 subfamily. As to quaternary structure, monomer.

The protein localises to the cytoplasm. The catalysed reaction is tRNA(Glu) + L-glutamate + ATP = L-glutamyl-tRNA(Glu) + AMP + diphosphate. Functionally, catalyzes the attachment of glutamate to tRNA(Glu) in a two-step reaction: glutamate is first activated by ATP to form Glu-AMP and then transferred to the acceptor end of tRNA(Glu). This Bacillus licheniformis (strain ATCC 14580 / DSM 13 / JCM 2505 / CCUG 7422 / NBRC 12200 / NCIMB 9375 / NCTC 10341 / NRRL NRS-1264 / Gibson 46) protein is Glutamate--tRNA ligase.